The primary structure comprises 268 residues: Hydroxyethylthiazole kinase (268 aa).

Met-45 provides a ligand contact to substrate. Positions 121 and 167 each coordinate ATP. Position 194 (Gly-194) interacts with substrate.

The protein belongs to the Thz kinase family. Requires Mg(2+) as cofactor.

It carries out the reaction 5-(2-hydroxyethyl)-4-methylthiazole + ATP = 4-methyl-5-(2-phosphooxyethyl)-thiazole + ADP + H(+). It participates in cofactor biosynthesis; thiamine diphosphate biosynthesis; 4-methyl-5-(2-phosphoethyl)-thiazole from 5-(2-hydroxyethyl)-4-methylthiazole: step 1/1. Catalyzes the phosphorylation of the hydroxyl group of 4-methyl-5-beta-hydroxyethylthiazole (THZ). The protein is Hydroxyethylthiazole kinase of Bacillus cereus (strain ZK / E33L).